The chain runs to 810 residues: Oligoxyloglucan-reducing end-specific xyloglucanase (810 aa).

The N-terminal stretch at 1–28 is a signal peptide; that stretch reads MRAKNGPGSWLALTAIATSLNTLALAAA. N-linked (GlcNAc...) asparagine glycosylation occurs at N32. Catalysis depends on D66, which acts as the Nucleophile. The stretch at 126–135 is one BNR 1 repeat; sequence FVSQDRGATF. The N-linked (GlcNAc...) asparagine glycan is linked to N188. A BNR 2 repeat occupies 226-236; it reads YVTRDSGESWE. N-linked (GlcNAc...) asparagine glycosylation is found at N298, N312, and N321. The BNR 3 repeat unit spans residues 359-369; it reads YLSHDGGKSWK. An N-linked (GlcNAc...) asparagine glycan is attached at N455. D498 serves as the catalytic Proton donor. N-linked (GlcNAc...) asparagine glycosylation occurs at N544. The stretch at 554–564 is one BNR 4 repeat; the sequence is YSADGGSSWTK. 2 N-linked (GlcNAc...) asparagine glycosylation sites follow: N573 and N612. The stretch at 617-626 is one BNR 5 repeat; the sequence is YVTTDLGQTW. Residue N638 is glycosylated (N-linked (GlcNAc...) asparagine). 3 BNR repeats span residues 658–667, 705–716, and 759–769; these read YLSRDGGLSY, YHTRNFGKKWTK, and YRSDDNGKTWV.

This sequence belongs to the glycosyl hydrolase 74 family.

The protein localises to the secreted. The catalysed reaction is Hydrolysis of cellobiose from the reducing end of xyloglucans consisting of a beta-(1-&gt;4)-linked glucan carrying alpha-D-xylosyl groups on O-6 of the glucose residues. To be a substrate, the first residue must be unsubstituted, the second residue may bear a xylosyl group, whether further glycosylated or not, and the third residue, which becomes the new terminus by the action of the enzyme, is preferably xylosylated, but this xylose residue must not be further substituted.. Its function is as follows. Oligoxyloglucan-reducing end-specific xyloglucanase involved in degradation of xyloglucans. Releases the first two glycosyl segments from oligoxyloglucans. Active against cotton xyloglucan, tamarind xyloglucan and tamarind xyloglucan oligomers. The sequence is that of Oligoxyloglucan-reducing end-specific xyloglucanase (xgcA) from Emericella nidulans (strain FGSC A4 / ATCC 38163 / CBS 112.46 / NRRL 194 / M139) (Aspergillus nidulans).